Reading from the N-terminus, the 509-residue chain is ATP synthase subunit alpha (509 aa).

169 to 176 (GDRQTGKT) lines the ATP pocket.

Belongs to the ATPase alpha/beta chains family. F-type ATPases have 2 components, CF(1) - the catalytic core - and CF(0) - the membrane proton channel. CF(1) has five subunits: alpha(3), beta(3), gamma(1), delta(1), epsilon(1). CF(0) has three main subunits: a(1), b(2) and c(9-12). The alpha and beta chains form an alternating ring which encloses part of the gamma chain. CF(1) is attached to CF(0) by a central stalk formed by the gamma and epsilon chains, while a peripheral stalk is formed by the delta and b chains.

It is found in the cell inner membrane. The enzyme catalyses ATP + H2O + 4 H(+)(in) = ADP + phosphate + 5 H(+)(out). In terms of biological role, produces ATP from ADP in the presence of a proton gradient across the membrane. The alpha chain is a regulatory subunit. This is ATP synthase subunit alpha from Novosphingobium aromaticivorans (strain ATCC 700278 / DSM 12444 / CCUG 56034 / CIP 105152 / NBRC 16084 / F199).